The chain runs to 147 residues: MKNLKKQRRIQVIALATVALVLSTALIGYAMRDGINFFRAPTQILAEPPAPTEVFRIGGLVEEGSIVRGQGETIRFSVTDGNGVVPVTYTGVLPDLFEENQGMVGTGSYINGVFEASEILAKHDETYMPAEVVDMLKEQGVYKGTEG.

At 1–9 (MKNLKKQRR) the chain is on the cytoplasmic side. A helical; Signal-anchor for type II membrane protein transmembrane segment spans residues 10–30 (IQVIALATVALVLSTALIGYA). At 31–147 (MRDGINFFRA…EQGVYKGTEG (117 aa)) the chain is on the periplasmic side. Heme contacts are provided by histidine 123 and tyrosine 127.

Belongs to the CcmE/CycJ family.

The protein resides in the cell inner membrane. Functionally, heme chaperone required for the biogenesis of c-type cytochromes. Transiently binds heme delivered by CcmC and transfers the heme to apo-cytochromes in a process facilitated by CcmF and CcmH. In Roseobacter denitrificans (strain ATCC 33942 / OCh 114) (Erythrobacter sp. (strain OCh 114)), this protein is Cytochrome c-type biogenesis protein CcmE.